A 49-amino-acid chain; its full sequence is uncharacterized protein (49 aa).

This is an uncharacterized protein from Sulfolobus spindle-shape virus 1 (SSV1).